We begin with the raw amino-acid sequence, 407 residues long: Imidazolonepropionase (407 aa).

Histidine 68 and histidine 70 together coordinate Fe(3+). Zn(2+) is bound by residues histidine 68 and histidine 70. 4-imidazolone-5-propanoate contacts are provided by arginine 77, tyrosine 140, and histidine 173. Tyrosine 140 is a binding site for N-formimidoyl-L-glutamate. Fe(3+) is bound at residue histidine 236. Histidine 236 provides a ligand contact to Zn(2+). A 4-imidazolone-5-propanoate-binding site is contributed by glutamine 239. Position 311 (aspartate 311) interacts with Fe(3+). Aspartate 311 contacts Zn(2+). Residues asparagine 313 and glycine 315 each coordinate N-formimidoyl-L-glutamate. Threonine 316 is a 4-imidazolone-5-propanoate binding site.

This sequence belongs to the metallo-dependent hydrolases superfamily. HutI family. Zn(2+) serves as cofactor. The cofactor is Fe(3+).

It localises to the cytoplasm. It catalyses the reaction 4-imidazolone-5-propanoate + H2O = N-formimidoyl-L-glutamate. The protein operates within amino-acid degradation; L-histidine degradation into L-glutamate; N-formimidoyl-L-glutamate from L-histidine: step 3/3. Its function is as follows. Catalyzes the hydrolytic cleavage of the carbon-nitrogen bond in imidazolone-5-propanoate to yield N-formimidoyl-L-glutamate. It is the third step in the universal histidine degradation pathway. The chain is Imidazolonepropionase from Stenotrophomonas maltophilia (strain R551-3).